A 174-amino-acid chain; its full sequence is Ribosomal RNA large subunit methyltransferase H (174 aa).

S-adenosyl-L-methionine contacts are provided by residues leucine 90, glycine 122, and 141–146 (LGELTW).

The protein belongs to the RNA methyltransferase RlmH family. Homodimer.

The protein resides in the cytoplasm. It catalyses the reaction pseudouridine(1915) in 23S rRNA + S-adenosyl-L-methionine = N(3)-methylpseudouridine(1915) in 23S rRNA + S-adenosyl-L-homocysteine + H(+). Functionally, specifically methylates the pseudouridine at position 1915 (m3Psi1915) in 23S rRNA. The sequence is that of Ribosomal RNA large subunit methyltransferase H from Brucella melitensis biotype 2 (strain ATCC 23457).